Reading from the N-terminus, the 227-residue chain is UPF0758 protein Psyc_1834 (227 aa).

Residues 102-224 enclose the MPN domain; the sequence is GLGRSQMVKD…TLSYAENCLA (123 aa). The Zn(2+) site is built by histidine 173, histidine 175, and aspartate 186. A JAMM motif motif is present at residues 173-186; that stretch reads HNHPHTDATPSTAD.

Belongs to the UPF0758 family.

The chain is UPF0758 protein Psyc_1834 from Psychrobacter arcticus (strain DSM 17307 / VKM B-2377 / 273-4).